The following is a 102-amino-acid chain: Small ribosomal subunit protein uS10 (102 aa).

The segment at 35 to 58 (SGPIPLPTKTLEIPSRKSPDGEGT) is disordered.

The protein belongs to the universal ribosomal protein uS10 family. In terms of assembly, part of the 30S ribosomal subunit.

Involved in the binding of tRNA to the ribosomes. The polypeptide is Small ribosomal subunit protein uS10 (Halorubrum lacusprofundi (strain ATCC 49239 / DSM 5036 / JCM 8891 / ACAM 34)).